The sequence spans 147 residues: Lysozyme C (147 aa).

The first 18 residues, Met1 to Gly18, serve as a signal peptide directing secretion. The C-type lysozyme domain occupies Lys19–Leu147. 4 disulfide bridges follow: Cys24–Cys145, Cys48–Cys133, Cys83–Cys99, and Cys95–Cys113. Catalysis depends on residues Glu53 and Asp71.

The protein belongs to the glycosyl hydrolase 22 family. Monomer. As to expression, stomach-specific.

It catalyses the reaction Hydrolysis of (1-&gt;4)-beta-linkages between N-acetylmuramic acid and N-acetyl-D-glucosamine residues in a peptidoglycan and between N-acetyl-D-glucosamine residues in chitodextrins.. In terms of biological role, lysozymes have primarily a bacteriolytic function; those in tissues and body fluids are associated with the monocyte-macrophage system and enhance the activity of immunoagents. The sequence is that of Lysozyme C (LYZ1) from Bos taurus (Bovine).